A 219-amino-acid polypeptide reads, in one-letter code: 3,4-dihydroxy-2-butanone 4-phosphate synthase (219 aa).

Residues 37-38 (RE), aspartate 42, 150-154 (RRGHT), and glutamate 174 each bind D-ribulose 5-phosphate. Glutamate 38 contacts Mg(2+). Position 153 (histidine 153) interacts with Mg(2+).

This sequence belongs to the DHBP synthase family. As to quaternary structure, homodimer. Mg(2+) serves as cofactor. The cofactor is Mn(2+).

It carries out the reaction D-ribulose 5-phosphate = (2S)-2-hydroxy-3-oxobutyl phosphate + formate + H(+). It participates in cofactor biosynthesis; riboflavin biosynthesis; 2-hydroxy-3-oxobutyl phosphate from D-ribulose 5-phosphate: step 1/1. Functionally, catalyzes the conversion of D-ribulose 5-phosphate to formate and 3,4-dihydroxy-2-butanone 4-phosphate. The protein is 3,4-dihydroxy-2-butanone 4-phosphate synthase of Edwardsiella ictaluri (strain 93-146).